We begin with the raw amino-acid sequence, 148 residues long: Deoxyuridine 5'-triphosphate nucleotidohydrolase (148 aa).

Residues 67 to 69, Asn-80, 84 to 86, and Met-94 each bind substrate; these read RSG and LID.

It belongs to the dUTPase family. It depends on Mg(2+) as a cofactor.

It catalyses the reaction dUTP + H2O = dUMP + diphosphate + H(+). The protein operates within pyrimidine metabolism; dUMP biosynthesis; dUMP from dCTP (dUTP route): step 2/2. Functionally, this enzyme is involved in nucleotide metabolism: it produces dUMP, the immediate precursor of thymidine nucleotides and it decreases the intracellular concentration of dUTP so that uracil cannot be incorporated into DNA. The polypeptide is Deoxyuridine 5'-triphosphate nucleotidohydrolase (Francisella philomiragia subsp. philomiragia (strain ATCC 25017 / CCUG 19701 / FSC 153 / O#319-036)).